Here is a 1140-residue protein sequence, read N- to C-terminus: Receptor-type guanylate cyclase gcy-3 (1140 aa).

The N-terminal stretch at 1 to 21 (MKNVFQLLIPLFFHLFSLVSL) is a signal peptide. The Extracellular portion of the chain corresponds to 22–495 (QNIPVSTGTT…CPLPFWEQYG (474 aa)). 7 N-linked (GlcNAc...) asparagine glycosylation sites follow: asparagine 220, asparagine 301, asparagine 349, asparagine 385, asparagine 418, asparagine 441, and asparagine 459. A helical transmembrane segment spans residues 496–516 (ILIFVGAGVFLIMITTNLICF). The Cytoplasmic segment spans residues 517 to 1140 (LFMIKNRREE…RQYKMDTLKI (624 aa)). In terms of domain architecture, Protein kinase spans 538-826 (FVKLRELERK…NICEQLRDLM (289 aa)). ATP is bound by residues 544-552 (LERKSKGTS) and lysine 582. One can recognise a Guanylate cyclase domain in the interval 897–1027 (TVFFSDVVKF…DTVNTASRME (131 aa)). The interval 1083-1140 (PSISNRSTPPVTQERFTVRAPDTPEARSVSSHGSRPSSNHNNNNDPLYRQYKMDTLKI) is disordered. A compositionally biased stretch (polar residues) spans 1084–1097 (SISNRSTPPVTQER). Positions 1109–1126 (RSVSSHGSRPSSNHNNNN) are enriched in low complexity.

Belongs to the adenylyl cyclase class-4/guanylyl cyclase family. Expressed asymmetrically in ASE right (ASER) sensory neuron and bilaterally in ASI sensory neurons. Expressed in PVT interneuron.

Its subcellular location is the cell membrane. It catalyses the reaction GTP = 3',5'-cyclic GMP + diphosphate. Guanylate cyclase involved in the production of the second messenger cGMP. In Caenorhabditis elegans, this protein is Receptor-type guanylate cyclase gcy-3.